The following is a 230-amino-acid chain: Large ribosomal subunit protein uL1 (230 aa).

It belongs to the universal ribosomal protein uL1 family. As to quaternary structure, part of the 50S ribosomal subunit.

In terms of biological role, binds directly to 23S rRNA. The L1 stalk is quite mobile in the ribosome, and is involved in E site tRNA release. Protein L1 is also a translational repressor protein, it controls the translation of the L11 operon by binding to its mRNA. The polypeptide is Large ribosomal subunit protein uL1 (Rubrobacter xylanophilus (strain DSM 9941 / JCM 11954 / NBRC 16129 / PRD-1)).